The sequence spans 567 residues: MIDRQRMGLWALAILTLPMYLTVTEGSKSSWGLENEALIVRCPQRGRSTYPVEWYYSDTNESIPTQKRNRIFVSRDRLKFLPARVEDSGIYACVIRSPNLNKTGYLNVTIHKKPPSCNIPDYLMYSTVRGSDKNFKITCPTIDLYNWTAPVQWFKNCKALQEPRFRAHRSYLFIDNVTHDDEGDYTCQFTHAENGTNYIVTATRSFTVEEKGFSMFPVITNPPYNHTMEVEIGKPASIACSACFGKGSHFLADVLWQINKTVVGNFGEARIQEEEGRNESSSNDMDCLTSVLRITGVTEKDLSLEYDCLALNLHGMIRHTIRLRRKQPIDHRSIYYIVAGCSLLLMFINVLVIVLKVFWIEVALFWRDIVTPYKTRNDGKLYDAYIIYPRVFRGSAAGTHSVEYFVHHTLPDVLENKCGYKLCIYGRDLLPGQDAATVVESSIQNSRRQVFVLAPHMMHSKEFAYEQEIALHSALIQNNSKVILIEMEPLGEASRLQVGDLQDSLQHLVKIQGTIKWREDHVADKQSLSSKFWKHVRYQMPVPERASKTASVAAPLSGKACLDLKHF.

A signal peptide spans 1 to 26 (MIDRQRMGLWALAILTLPMYLTVTEG). 2 consecutive Ig-like C2-type domains span residues 27 to 109 (SKSS…LNVT) and 120 to 203 (PDYL…VTAT). Over 27–332 (SKSSWGLENE…LRRKQPIDHR (306 aa)) the chain is Extracellular. C42 and C93 form a disulfide bridge. N-linked (GlcNAc...) asparagine glycosylation is found at N60, N101, N107, N146, N176, and N194. Intrachain disulfides connect C117–C157 and C139–C187. The interval 204 to 216 (RSFTVEEKGFSMF) is flexible linker. One can recognise an Ig-like C2-type 3 domain in the interval 217–324 (PVITNPPYNH…GMIRHTIRLR (108 aa)). N-linked (GlcNAc...) asparagine glycosylation is found at N225, N259, and N278. 2 cysteine pairs are disulfide-bonded: C240–C308 and C243–C287. Residue K326 forms a Glycyl lysine isopeptide (Lys-Gly) (interchain with G-Cter in ubiquitin) linkage. The helical transmembrane segment at 333–355 (SIYYIVAGCSLLLMFINVLVIVL) threads the bilayer. Over 356-567 (KVFWIEVALF…GKACLDLKHF (212 aa)) the chain is Cytoplasmic. Residues 380 to 540 (KLYDAYIIYP…KFWKHVRYQM (161 aa)) enclose the TIR domain. S442 bears the Phosphoserine; by GSK3-beta mark. E466 is an active-site residue.

This sequence belongs to the interleukin-1 receptor family. In terms of assembly, interacts with MYD88, IRAK1, IRAK4, and TRAF6. Bound to its ligand IL33, interacts with IL1RAP to form the minimal interleukin-33 signaling complex with a 1:1:1 stoichiometry. Interacts with KIT (bound to KITLG/SCF). A mast cell-specific KITLG/SCF-induced interleukin-33 signaling complex contains IL1RL1, IL1RAP, KIT and MYD88. Interacts with TMED1. In terms of processing, phosphorylated by GSK3B at Ser-442; leading to proteasomal degradation. Ubiquitinated at Lys-326 in a FBXL19-mediated manner; leading to proteasomal degradation. Ubiquitination by TRAF6 via 'Lys-27'-linked polyubiquitination and deubiquitination by USP38 serves as a critical regulatory mechanism for fine-tuning IL1RL1-mediated inflammatory response. In terms of tissue distribution, predominantly expressed in hematopoietic tissues, and in macrophage, erythroid, epithelial and fibroblast cell lines. Isoform A is expressed in brain astrocytes and microglia. Isoform B is expressed in brain endothelial cells.

It is found in the cell membrane. Its subcellular location is the secreted. It catalyses the reaction NAD(+) + H2O = ADP-D-ribose + nicotinamide + H(+). Receptor for interleukin-33 (IL-33) which plays crucial roles in innate and adaptive immunity, contributing to tissue homeostasis and responses to environmental stresses together with coreceptor IL1RAP. Its stimulation recruits MYD88, IRAK1, IRAK4, and TRAF6, followed by phosphorylation of MAPK3/ERK1 and/or MAPK1/ERK2, MAPK14, and MAPK8. Possibly involved in helper T-cell function. Upon tissue injury, induces UCP2-dependent mitochondrial rewiring that attenuates the generation of reactive oxygen species and preserves the integrity of Krebs cycle required for persistent production of itaconate and subsequent GATA3-dependent differentiation of inflammation-resolving alternatively activated macrophages. Functionally, inhibits IL-33 signaling. This Mus musculus (Mouse) protein is Interleukin-1 receptor-like 1 (Il1rl1).